We begin with the raw amino-acid sequence, 338 residues long: DNA-directed RNA polymerase subunit alpha (338 aa).

Positions 1–10 are enriched in polar residues; it reads MIQKNWQTLE. The segment at 1–24 is disordered; that stretch reads MIQKNWQTLEKPSKLDITPGSDPK. The interval 1–234 is alpha N-terminal domain (alpha-NTD); the sequence is MIQKNWQTLE…DQLQMFINFE (234 aa). Positions 250-338 are alpha C-terminal domain (alpha-CTD); that stretch reads FNKNLLRKVD…DLAKRLEEPY (89 aa).

This sequence belongs to the RNA polymerase alpha chain family. As to quaternary structure, homodimer. The RNAP catalytic core consists of 2 alpha, 1 beta, 1 beta' and 1 omega subunit. When a sigma factor is associated with the core the holoenzyme is formed, which can initiate transcription.

The enzyme catalyses RNA(n) + a ribonucleoside 5'-triphosphate = RNA(n+1) + diphosphate. Functionally, DNA-dependent RNA polymerase catalyzes the transcription of DNA into RNA using the four ribonucleoside triphosphates as substrates. The polypeptide is DNA-directed RNA polymerase subunit alpha (Rhodospirillum centenum (strain ATCC 51521 / SW)).